A 366-amino-acid chain; its full sequence is Elongation factor Ts, mitochondrial (366 aa).

Residues 1 to 50 (MAWSQSARKPMIGLLFRAQQHSARGYSYSAFQAHLSSSNVDQSATLLRRF) constitute a mitochondrion transit peptide.

This sequence belongs to the EF-Ts family.

Its subcellular location is the mitochondrion. Its function is as follows. Associates with the EF-Tu.GDP complex and induces the exchange of GDP to GTP. It remains bound to the aminoacyl-tRNA.EF-Tu.GTP complex up to the GTP hydrolysis stage on the ribosome. The polypeptide is Elongation factor Ts, mitochondrial (Oryza sativa subsp. japonica (Rice)).